A 443-amino-acid chain; its full sequence is Squalene synthase (443 aa).

2 helical membrane passes run 291 to 311 and 423 to 443; these read TSFN…ELVF and ILLL…VRII.

This sequence belongs to the phytoene/squalene synthase family. Mg(2+) serves as cofactor.

It is found in the endoplasmic reticulum membrane. The catalysed reaction is 2 (2E,6E)-farnesyl diphosphate + NADPH + H(+) = squalene + 2 diphosphate + NADP(+). It catalyses the reaction 2 (2E,6E)-farnesyl diphosphate + NADH + H(+) = squalene + 2 diphosphate + NAD(+). The protein operates within terpene metabolism; lanosterol biosynthesis; lanosterol from farnesyl diphosphate: step 1/3. In terms of biological role, catalyzes the condensation of 2 two farnesyl pyrophosphate moieties to form squalene. It is the first committed enzyme of the sterol biosynthesis pathway. Required for the biosynthesis of ergosterol. This chain is Squalene synthase (ERG9), found in Cyberlindnera jadinii (Torula yeast).